The following is a 1265-amino-acid chain: Shugoshin 2 (1265 aa).

The stretch at 69-116 forms a coiled coil; sequence KENSRRITTEKMLLQKEVEKLNFENTFLRLKLNNLNKKLIDIEALMNN. Disordered stretches follow at residues 161–202, 230–287, 305–339, and 381–447; these read LTSN…STQD, DVPP…NLSA, LNCN…SARE, and GIKK…GAED. Over residues 190 to 202 the composition is skewed to polar residues; sequence SSGSTTQPLSTQD. Positions 232-242 are enriched in basic and acidic residues; the sequence is PPRESHSHSDQ. Positions 305–322 are enriched in polar residues; sequence LNCNNEINGHTNETNTEM. 2 stretches are compositionally biased toward basic and acidic residues: residues 389–410 and 425–446; these read KTNE…EKKR and IGEK…RGAE. A coiled-coil region spans residues 452-476; the sequence is FNNEQLAQMNEQLAQVNELKKMTLQ. The disordered stretch occupies residues 499 to 526; the sequence is EQEETYSLSQSSGKFHQESKFDKGQNSL. Positions 503-512 are enriched in polar residues; the sequence is TYSLSQSSGK. A coiled-coil region spans residues 603–626; it reads EQNESNINKLRKKVNRKTEIISGM. Positions 1073–1083 are enriched in basic residues; the sequence is NKMTSKSKKRK. The disordered stretch occupies residues 1073-1093; the sequence is NKMTSKSKKRKTSIDPSPESH. Serine 1144 is subject to Phosphoserine. The segment at 1200–1265 is disordered; that stretch reads KVNRRTQKSG…EPSLRDKMRR (66 aa). A compositionally biased stretch (polar residues) spans 1217-1230; it reads DLSNTSFVSNNTAE. Positions 1231-1243 are enriched in basic and acidic residues; that stretch reads SENKSEDLSSERT.

Belongs to the shugoshin family. As to quaternary structure, part of an astrin (SPAG5) -kinastrin (SKAP) complex containing KNSTRN, SPAG5, PLK1, DYNLL1 and SGO2. Interacts with CDCA8. Directly interacts with PPP2CA.

The protein localises to the nucleus. It is found in the chromosome. The protein resides in the centromere. It localises to the kinetochore. Its function is as follows. Cooperates with PPP2CA to protect centromeric cohesin from separase-mediated cleavage in oocytes specifically during meiosis I. Has a crucial role in protecting REC8 at centromeres from cleavage by separase. During meiosis, protects centromeric cohesion complexes until metaphase II/anaphase II transition, preventing premature release of meiosis-specific REC8 cohesin complexes from anaphase I centromeres. Is thus essential for an accurate gametogenesis. May act by targeting PPP2CA to centromeres, thus leading to cohesin dephosphorylation. Essential for recruiting KIF2C to the inner centromere and for correcting defective kinetochore attachments. Involved in centromeric enrichment of AUKRB in prometaphase. This chain is Shugoshin 2, found in Homo sapiens (Human).